The sequence spans 58 residues: Ribosome modulation factor (58 aa).

A disordered region spans residues 1 to 28 (MKRQKRDRFERAHTQGFKAGLHGRSKDN).

Belongs to the ribosome modulation factor family.

The protein resides in the cytoplasm. Functionally, during stationary phase, converts 70S ribosomes to an inactive dimeric form (100S ribosomes). This Idiomarina loihiensis (strain ATCC BAA-735 / DSM 15497 / L2-TR) protein is Ribosome modulation factor.